A 159-amino-acid chain; its full sequence is Fimbrial protein MyfA (159 aa).

The first 29 residues, 1 to 29 (MNMKKFVKKPLAIAVLMLASGGMVNMVHA), serve as a signal peptide directing secretion.

As to quaternary structure, forms a homomer composed of subunits assembled in a large structure resistant to proteases and chaotropic agents.

Its subcellular location is the fimbrium. Functionally, major pilus subunit. Expressed only in pathogenic serotypes, it is part of myf, a probable virulence factor. This Yersinia enterocolitica protein is Fimbrial protein MyfA (myfA).